Consider the following 611-residue polypeptide: Endo-1,4-beta-xylanase A (611 aa).

The signal sequence occupies residues 1–26 (MRTAMAKSLGAAAFLGAALFAHTLAA). A CBM2 domain is found at 27 to 128 (QTATCSYNIT…SVGGSICSGS (102 aa)). Disulfide bonds link Cys-31–Cys-125, Cys-184–Cys-215, and Cys-194–Cys-209. In terms of domain architecture, CBM10 spans 183–212 (QCNWYGTLYPLCVTTTNGWGWEDQRSCIAR). One can recognise a GH10 domain in the interval 281–607 (SGGNADIFTS…KPAYQGVVEA (327 aa)). Glu-391 serves as the catalytic Proton donor. Glu-510 serves as the catalytic Nucleophile.

Belongs to the glycosyl hydrolase 10 (cellulase F) family.

The catalysed reaction is Endohydrolysis of (1-&gt;4)-beta-D-xylosidic linkages in xylans.. The protein operates within glycan degradation; xylan degradation. The sequence is that of Endo-1,4-beta-xylanase A (xynA) from Cellvibrio japonicus (strain Ueda107) (Pseudomonas fluorescens subsp. cellulosa).